Here is a 364-residue protein sequence, read N- to C-terminus: Salivary endonuclease (364 aa).

An N-terminal signal peptide occupies residues 1–24; sequence MSSFFLSISPLVLALFHVVVQVCS. The N-linked (GlcNAc...) asparagine glycan is linked to Asn285.

Belongs to the DNA/RNA non-specific endonuclease family. It depends on Mg(2+) as a cofactor. As to expression, saliva (at protein level). Female salivary gland.

Its subcellular location is the secreted. In terms of biological role, hydrolyzes double-stranded DNA with no sequence specificity. Does not cleave ssDNA and RNA. May facilitate blood meal intake by lowering the local viscosity created by the release of host DNA. This Culex quinquefasciatus (Southern house mosquito) protein is Salivary endonuclease.